We begin with the raw amino-acid sequence, 245 residues long: 6-carboxyhexanoate--CoA ligase (245 aa).

It belongs to the BioW family. In terms of assembly, homodimer. It depends on Mg(2+) as a cofactor.

The enzyme catalyses heptanedioate + ATP + CoA = 6-carboxyhexanoyl-CoA + AMP + diphosphate. It participates in metabolic intermediate metabolism; pimeloyl-CoA biosynthesis; pimeloyl-CoA from pimelate: step 1/1. Catalyzes the transformation of pimelate into pimeloyl-CoA with concomitant hydrolysis of ATP to AMP. This is 6-carboxyhexanoate--CoA ligase from Sulfurihydrogenibium azorense (strain DSM 15241 / OCM 825 / Az-Fu1).